Here is a 314-residue protein sequence, read N- to C-terminus: Oxaloacetate tautomerase FAHD2A, mitochondrial (314 aa).

The N-terminal 84 residues, 1 to 84, are a transit peptide targeting the mitochondrion; it reads MLGSSGRRLL…ATLSVVRRAL (84 aa). Glu159, Glu161, and Asp190 together coordinate Mg(2+).

This sequence belongs to the FAH family. Requires Mg(2+) as cofactor. It depends on Mn(2+) as a cofactor.

Its subcellular location is the mitochondrion. It carries out the reaction oxaloacetate = enol-oxaloacetate. Tautomerase that converts enol-oxaloacetate, a strong inhibitor of succinate dehydrogenase, to the physiological keto form of oxaloacetate. It is thereby required to maximize aerobic respiration efficiency by preventing succinate dehydrogenase inhibition. In Bos taurus (Bovine), this protein is Oxaloacetate tautomerase FAHD2A, mitochondrial.